The following is a 1040-amino-acid chain: Multidrug resistance protein MdtB (1040 aa).

12 consecutive transmembrane segments (helical) span residues 16–36, 347–367, 369–389, 396–416, 440–460, 472–492, 537–557, 863–883, 888–908, 911–931, 968–988, and 998–1018; these read FIMR…AGII, LMMA…NIPA, IIPG…MVFL, LTLM…IVVI, IGFT…PLLF, FAIT…TLTP, WLTL…WVFI, LGST…VLGI, FIHP…ALLA, IAGS…IGIV, ILMT…STGV, and IGMV…TPVI.

This sequence belongs to the resistance-nodulation-cell division (RND) (TC 2.A.6) family. MdtB subfamily. As to quaternary structure, part of a tripartite efflux system composed of MdtA, MdtB and MdtC. MdtB forms a heteromultimer with MdtC.

It localises to the cell inner membrane. The polypeptide is Multidrug resistance protein MdtB (Shigella sonnei (strain Ss046)).